A 392-amino-acid chain; its full sequence is DNA replication and repair protein RecF (392 aa).

ATP is bound at residue 30-37; that stretch reads GRNGFGKT.

This sequence belongs to the RecF family.

The protein localises to the cytoplasm. Functionally, the RecF protein is involved in DNA metabolism; it is required for DNA replication and normal SOS inducibility. RecF binds preferentially to single-stranded, linear DNA. It also seems to bind ATP. In Corynebacterium aurimucosum (strain ATCC 700975 / DSM 44827 / CIP 107346 / CN-1) (Corynebacterium nigricans), this protein is DNA replication and repair protein RecF.